A 200-amino-acid chain; its full sequence is Holliday junction branch migration complex subunit RuvA (200 aa).

Residues 1–63 are domain I; it reads MFEYLTGLIT…EDAITLFGFA (63 aa). Positions 64-142 are domain II; the sequence is TQAEKRLFTQ…AVQDEVQLDF (79 aa). The interval 143-151 is flexible linker; it reads TAPGPLGPS. Positions 151 to 200 are domain III; it reads SAALQDALAALESLGYTTKQVERVQKQLEGLQGELSTNDYLSQGLKLLSR.

It belongs to the RuvA family. Homotetramer. Forms an RuvA(8)-RuvB(12)-Holliday junction (HJ) complex. HJ DNA is sandwiched between 2 RuvA tetramers; dsDNA enters through RuvA and exits via RuvB. An RuvB hexamer assembles on each DNA strand where it exits the tetramer. Each RuvB hexamer is contacted by two RuvA subunits (via domain III) on 2 adjacent RuvB subunits; this complex drives branch migration. In the full resolvosome a probable DNA-RuvA(4)-RuvB(12)-RuvC(2) complex forms which resolves the HJ.

The protein resides in the cytoplasm. The RuvA-RuvB-RuvC complex processes Holliday junction (HJ) DNA during genetic recombination and DNA repair, while the RuvA-RuvB complex plays an important role in the rescue of blocked DNA replication forks via replication fork reversal (RFR). RuvA specifically binds to HJ cruciform DNA, conferring on it an open structure. The RuvB hexamer acts as an ATP-dependent pump, pulling dsDNA into and through the RuvAB complex. HJ branch migration allows RuvC to scan DNA until it finds its consensus sequence, where it cleaves and resolves the cruciform DNA. The polypeptide is Holliday junction branch migration complex subunit RuvA (Limosilactobacillus fermentum (strain NBRC 3956 / LMG 18251) (Lactobacillus fermentum)).